We begin with the raw amino-acid sequence, 314 residues long: Olfactory receptor 52K2 (314 aa).

The Extracellular portion of the chain corresponds to 1 to 27; sequence MSASNITLTHPTAFLLVGIPGLEHLHI. Residue Asn5 is glycosylated (N-linked (GlcNAc...) asparagine). Residues 28–48 form a helical membrane-spanning segment; that stretch reads WISIPFCLAYTLALLGNCTLL. The Cytoplasmic segment spans residues 49 to 56; the sequence is LIIQADAA. Residues 57–77 traverse the membrane as a helical segment; sequence LHEPMYLFLAMLAAIDLVLSS. Topologically, residues 78 to 101 are extracellular; it reads SALPKMLAIFWFRDREINFFACLA. Cysteines 99 and 191 form a disulfide. The chain crosses the membrane as a helical span at residues 102–122; sequence QMFFLHSFSIMESAVLLAMAF. Residues 123 to 141 are Cytoplasmic-facing; sequence DRYVAICKPLHYTKVLTGS. The chain crosses the membrane as a helical span at residues 142–162; that stretch reads LITKIGMAAVARAVTLMTPLP. Residues 163–198 lie on the Extracellular side of the membrane; the sequence is FLLRCFHYCRGPVIAHCYCEHMAVVRLACGDTSFNN. The chain crosses the membrane as a helical span at residues 199-219; sequence IYGIAVAMFIVVLDLLLVILS. Topologically, residues 220-239 are cytoplasmic; the sequence is YIFILQAVLLLASQEARYKA. A helical transmembrane segment spans residues 240–260; sequence FGTCVSHIGAILAFYTTVVIS. Residues 261-275 lie on the Extracellular side of the membrane; the sequence is SVMHRVARHAAPHVH. Residues 276–296 traverse the membrane as a helical segment; that stretch reads ILLANFYLLFPPMVNPIIYGV. The Cytoplasmic portion of the chain corresponds to 297–314; sequence KTKQIRESILGVFPRKDM.

It belongs to the G-protein coupled receptor 1 family.

It localises to the cell membrane. Its function is as follows. Odorant receptor. The polypeptide is Olfactory receptor 52K2 (OR52K2) (Homo sapiens (Human)).